The sequence spans 310 residues: MSEELSKKHTTRLNKLQKRLRREVGSAIADYNMIEDGDKIMCCLSGGKDSYAMLDILMNLQQRAPIQFEIIAVNLDQKQPGFPEHVLPAYLEKLNVPYHILEKDTYSIVKDKIPEGKTTCSLCSRLRRGTLYGFAQRIGATKIALGHHRDDIIETLFLNMFFGGKMKAMPPKLLSDDGANVVIRPLAYCREKDLEEYANLREFPIIPCNLCGSQENLKRAAVKDMLNQWDRQYPGRIETIFTAMQNTAPSQGVDREQFDFVSLTRDPNAPMRGDVAEANLPAFDFLDIANSGRIDLDAAKRIDIVNTYEV.

A PP-loop motif motif is present at residues 45–50 (SGGKDS). [4Fe-4S] cluster contacts are provided by Cys120, Cys123, and Cys211.

Belongs to the TtcA family. In terms of assembly, homodimer. It depends on Mg(2+) as a cofactor. The cofactor is [4Fe-4S] cluster.

It is found in the cytoplasm. It carries out the reaction cytidine(32) in tRNA + S-sulfanyl-L-cysteinyl-[cysteine desulfurase] + AH2 + ATP = 2-thiocytidine(32) in tRNA + L-cysteinyl-[cysteine desulfurase] + A + AMP + diphosphate + H(+). The protein operates within tRNA modification. Catalyzes the ATP-dependent 2-thiolation of cytidine in position 32 of tRNA, to form 2-thiocytidine (s(2)C32). The sulfur atoms are provided by the cysteine/cysteine desulfurase (IscS) system. This chain is tRNA-cytidine(32) 2-sulfurtransferase, found in Shewanella baltica (strain OS195).